The chain runs to 669 residues: PAN2-PAN3 deadenylation complex subunit PAN3 (669 aa).

A compositionally biased stretch (polar residues) spans 1-10; the sequence is MATTFGSPSG. The tract at residues 1-25 is disordered; sequence MATTFGSPSGDSRRGVASPRPKGRE. The C3H1-type zinc-finger motif lies at 25–54; that stretch reads EAKNTFCRNVTIYGHCRYENSKCRPPHLPD. Residues 247–519 form a pseudokinase domain region; the sequence is QVMPNSTLPV…DIDNFLGGIS (273 aa). Residues arginine 298, 347–354, and 408–409 each bind ATP; these read DYHPNSKS and SK. Positions 520–558 form a coiled coil; sequence DQLASVFDSELHAQDTLTNTLGRELESSRIVRLLVKLNM. Residues 559–669 are knob domain; that stretch reads VNERPELDAS…LIRAGRGQGK (111 aa).

The protein belongs to the protein kinase superfamily. PAN3 family. Homodimer. Forms a heterotrimer with a catalytic subunit PAN2 to form the poly(A)-nuclease (PAN) deadenylation complex. Interacts (via PAM-2 motif) with poly(A)-binding protein PAB1 (via PABC domain), conferring substrate specificity of the enzyme complex.

It localises to the cytoplasm. Its function is as follows. Regulatory subunit of the poly(A)-nuclease (PAN) deadenylation complex, one of two cytoplasmic mRNA deadenylases involved in mRNA turnover. PAN specifically shortens poly(A) tails of RNA and the activity is stimulated by poly(A)-binding protein PAB1. PAN deadenylation is followed by rapid degradation of the shortened mRNA tails by the CCR4-NOT complex. Deadenylated mRNAs are then degraded by two alternative mechanisms, namely exosome-mediated 3'-5' exonucleolytic degradation, or deadenylation-dependent mRNA decaping and subsequent 5'-3' exonucleolytic degradation by XRN1. May also be involved in post-transcriptional maturation of mRNA poly(A) tails. PAN3 acts as a positive regulator for PAN activity, recruiting the catalytic subunit PAN2 to mRNA via its interaction with RNA and with PAB1. In Phaeosphaeria nodorum (strain SN15 / ATCC MYA-4574 / FGSC 10173) (Glume blotch fungus), this protein is PAN2-PAN3 deadenylation complex subunit PAN3.